Consider the following 140-residue polypeptide: Small ribosomal subunit protein uS12 (140 aa).

Residue Asp-102 is modified to 3-methylthioaspartic acid.

Belongs to the universal ribosomal protein uS12 family. In terms of assembly, part of the 30S ribosomal subunit. Contacts proteins S8 and S17. May interact with IF1 in the 30S initiation complex.

Functionally, with S4 and S5 plays an important role in translational accuracy. Interacts with and stabilizes bases of the 16S rRNA that are involved in tRNA selection in the A site and with the mRNA backbone. Located at the interface of the 30S and 50S subunits, it traverses the body of the 30S subunit contacting proteins on the other side and probably holding the rRNA structure together. The combined cluster of proteins S8, S12 and S17 appears to hold together the shoulder and platform of the 30S subunit. This is Small ribosomal subunit protein uS12 from Geobacillus stearothermophilus (Bacillus stearothermophilus).